The chain runs to 886 residues: DNA gyrase subunit A (886 aa).

Residues 35–501 (LPDVRDGLKP…GFEDLEDEDL (467 aa)) form the Topo IIA-type catalytic domain. Tyr-123 functions as the O-(5'-phospho-DNA)-tyrosine intermediate in the catalytic mechanism. The GyrA-box motif lies at 528–534 (QNRGGRG). Positions 810–860 (VKEDADEENEDEQSTVSEDGTEQQREAVVNDETPGNAIHTEVIDSEVNDED) are disordered. Over residues 813 to 822 (DADEENEDEQ) the composition is skewed to acidic residues.

Belongs to the type II topoisomerase GyrA/ParC subunit family. Heterotetramer, composed of two GyrA and two GyrB chains. In the heterotetramer, GyrA contains the active site tyrosine that forms a transient covalent intermediate with DNA, while GyrB binds cofactors and catalyzes ATP hydrolysis.

The protein localises to the cytoplasm. It carries out the reaction ATP-dependent breakage, passage and rejoining of double-stranded DNA.. In terms of biological role, a type II topoisomerase that negatively supercoils closed circular double-stranded (ds) DNA in an ATP-dependent manner to modulate DNA topology and maintain chromosomes in an underwound state. Negative supercoiling favors strand separation, and DNA replication, transcription, recombination and repair, all of which involve strand separation. Also able to catalyze the interconversion of other topological isomers of dsDNA rings, including catenanes and knotted rings. Type II topoisomerases break and join 2 DNA strands simultaneously in an ATP-dependent manner. In Staphylococcus aureus (strain MRSA252), this protein is DNA gyrase subunit A.